The following is a 378-amino-acid chain: Lipoyl synthase, mitochondrial (378 aa).

7 residues coordinate [4Fe-4S] cluster: cysteine 97, cysteine 102, cysteine 108, cysteine 128, cysteine 132, cysteine 135, and serine 343. Positions 111-332 (GSDKSAATAT…RQRALDMGFL (222 aa)) constitute a Radical SAM core domain.

It belongs to the radical SAM superfamily. Lipoyl synthase family. The cofactor is [4Fe-4S] cluster.

The protein resides in the mitochondrion. The catalysed reaction is [[Fe-S] cluster scaffold protein carrying a second [4Fe-4S](2+) cluster] + N(6)-octanoyl-L-lysyl-[protein] + 2 oxidized [2Fe-2S]-[ferredoxin] + 2 S-adenosyl-L-methionine + 4 H(+) = [[Fe-S] cluster scaffold protein] + N(6)-[(R)-dihydrolipoyl]-L-lysyl-[protein] + 4 Fe(3+) + 2 hydrogen sulfide + 2 5'-deoxyadenosine + 2 L-methionine + 2 reduced [2Fe-2S]-[ferredoxin]. Its pathway is protein modification; protein lipoylation via endogenous pathway; protein N(6)-(lipoyl)lysine from octanoyl-[acyl-carrier-protein]: step 2/2. Its function is as follows. Catalyzes the radical-mediated insertion of two sulfur atoms into the C-6 and C-8 positions of the octanoyl moiety bound to the lipoyl domains of lipoate-dependent enzymes, thereby converting the octanoylated domains into lipoylated derivatives. The chain is Lipoyl synthase, mitochondrial from Phaeosphaeria nodorum (strain SN15 / ATCC MYA-4574 / FGSC 10173) (Glume blotch fungus).